We begin with the raw amino-acid sequence, 397 residues long: Elongation factor Tu (397 aa).

The tr-type G domain maps to 10–207 (KPHVNIGTIG…ACDSYIEEPE (198 aa)). The G1 stretch occupies residues 19-26 (GHIDHGKT). A GTP-binding site is contributed by 19–26 (GHIDHGKT). Residue T26 coordinates Mg(2+). The tract at residues 60–64 (GITIA) is G2. The G3 stretch occupies residues 81-84 (DCPG). Residues 81–85 (DCPGH) and 136–139 (NKCD) each bind GTP. The segment at 136–139 (NKCD) is G4. The segment at 174-176 (SAL) is G5.

The protein belongs to the TRAFAC class translation factor GTPase superfamily. Classic translation factor GTPase family. EF-Tu/EF-1A subfamily. In terms of assembly, monomer.

The protein localises to the cytoplasm. The enzyme catalyses GTP + H2O = GDP + phosphate + H(+). In terms of biological role, GTP hydrolase that promotes the GTP-dependent binding of aminoacyl-tRNA to the A-site of ribosomes during protein biosynthesis. The polypeptide is Elongation factor Tu (Maridesulfovibrio salexigens (strain ATCC 14822 / DSM 2638 / NCIMB 8403 / VKM B-1763) (Desulfovibrio salexigens)).